The following is an 820-amino-acid chain: DNA mismatch repair protein MutS (820 aa).

615-622 serves as a coordination point for ATP; the sequence is GPNMAGKS.

Belongs to the DNA mismatch repair MutS family.

Its function is as follows. This protein is involved in the repair of mismatches in DNA. It is possible that it carries out the mismatch recognition step. This protein has a weak ATPase activity. The polypeptide is DNA mismatch repair protein MutS (Anaplasma phagocytophilum (strain HZ)).